The chain runs to 1130 residues: Integrin alpha-6 (1130 aa).

Residues 1–23 (MAAAGQLCLLYLSAGLLSRLGAA) form the signal peptide. The Extracellular segment spans residues 24-1050 (FNLDTREDNV…FPSKTVAQYS (1027 aa)). 7 FG-GAP repeats span residues 30-95 (EDNV…GPCT), 101-166 (NDAD…IEDD), 176-229 (DGRL…FFDM), 283-339 (EQPD…KSAH), 340-402 (LLPE…RWNN), 403-458 (VKPI…GINT), and 459-518 (KPTQ…VTPN). Asparagine 78 is a glycosylation site (N-linked (GlcNAc...) asparagine). 3 disulfide bridges follow: cysteine 86–cysteine 94, cysteine 131–cysteine 154, and cysteine 175–cysteine 188. Asparagine 223 and asparagine 323 each carry an N-linked (GlcNAc...) asparagine glycan. Ca(2+) contacts are provided by aspartate 363, asparagine 365, aspartate 367, and aspartate 371. N-linked (GlcNAc...) asparagine glycosylation is present at asparagine 409. 10 residues coordinate Ca(2+): aspartate 425, asparagine 427, aspartate 429, tyrosine 431, aspartate 433, aspartate 480, aspartate 482, asparagine 484, tyrosine 486, and aspartate 488. 4 cysteine pairs are disulfide-bonded: cysteine 528/cysteine 535, cysteine 541/cysteine 601, cysteine 665/cysteine 671, and cysteine 765/cysteine 776. 4 N-linked (GlcNAc...) asparagine glycosylation sites follow: asparagine 770, asparagine 787, asparagine 930, and asparagine 966. 2 cysteine pairs are disulfide-bonded: cysteine 920/cysteine 967 and cysteine 973/cysteine 978. The N-linked (GlcNAc...) asparagine glycan is linked to asparagine 997. The chain crosses the membrane as a helical span at residues 1051–1076 (GVPWWIILVAILAGILMLALLVFILW). Valine 1059 and glycine 1064 each carry phosphoserine. Positions 1077–1083 (KCGFFKR) are interaction with HPS5. Residues 1077–1130 (KCGFFKRSRYDDSVPRYHAVRIRKEEREIKDEKYIDNLEKKQWITKWNENESYS) are Cytoplasmic-facing. Cysteine 1078 carries the S-palmitoyl cysteine; by DHHC3 lipid modification. Residues 1079–1083 (GFFKR) carry the GFFKR motif motif. Arginine 1103 carries the phosphoserine modification.

Belongs to the integrin alpha chain family. As to quaternary structure, heterodimer of an alpha and a beta subunit. The alpha subunit is composed of a heavy and a light chain linked by a disulfide bond. Alpha-6 associates with either beta-1 (ITGB1) or beta-4 (ITGB4) to form ITGA6:ITGB1 and ITGA6:ITGB4, respectively. ITGA6:ITGB1 is found in a complex with CD9; interaction takes place in oocytes and is involved in sperm-egg fusion. ITGA6:ITGB4 is found in a ternary complex with NRG1 and ERBB3. ITGA6:ITGB4 is found in a ternary complex with IGF1 and IGF1R. ITGA6:ITGB4 interacts with IGF2. Interacts with ADAM9. Interacts with RAB21. Interacts with MDK. ITGA6:ITGB1 interacts with MDK; this interaction mediates MDK-induced neurite outgrowth. Interacts with CD82; this interaction down-regulates ITGA6-mediated cell adhesion. Isoforms containing segment A, but not segment B, are the major targets for PMA-induced phosphorylation. Phosphorylation occurs on 'Ser-1103' of isoform alpha-6X1X2A. Phosphorylation is not required for the induction of integrin alpha-6A/beta-1 high affinity but may reduce the affinity for ligand. Post-translationally, undergoes PLAU-mediated cleavage at residues Arg-634-635-Arg in a time-dependent manner to produce processed integrin alpha-6 (alpha6p). Production of alpha6p enhances prostate cancer cell invasion and migration. In terms of processing, palmitoylation by DHHC3 enhances stability and cell surface expression. Integrin alpha-6/beta-4 is predominantly expressed by epithelia. Isoforms containing segment X1 are ubiquitously expressed. Isoforms containing segment X1X2 are expressed in heart, kidney, placenta, colon, duodenum, myoblasts and myotubes, and in a limited number of cell lines; they are always coexpressed with the ubiquitous isoform containing segment X1. In some tissues (e.g. Salivary gland), isoforms containing cytoplasmic segment A and isoforms containing segment B are detected while in others, only isoforms containing one cytoplasmic segment are found (segment A in epidermis and segment B in kidney). Processed integrin alpha-6: Expressed at low levels in normal prostate tissue with elevated levels in prostate cancer tissue (at protein level).

It is found in the cell membrane. In terms of biological role, integrin alpha-6/beta-1 (ITGA6:ITGB1) is a receptor for laminin on platelets. Integrin alpha-6/beta-1 (ITGA6:ITGB1) is present in oocytes and is involved in sperm-egg fusion. Integrin alpha-6/beta-4 (ITGA6:ITGB4) is a receptor for laminin in epithelial cells and it plays a critical structural role in the hemidesmosome. ITGA6:ITGB4 binds to NRG1 (via EGF domain) and this binding is essential for NRG1-ERBB signaling. ITGA6:ITGB4 binds to IGF1 and this binding is essential for IGF1 signaling. ITGA6:ITGB4 binds to IGF2 and this binding is essential for IGF2 signaling. The polypeptide is Integrin alpha-6 (ITGA6) (Homo sapiens (Human)).